The primary structure comprises 375 residues: uncharacterized protein (375 aa).

A signal peptide spans 1-20 (MKNKLFIILIIFIILKIVIC). The Extracellular segment spans residues 21–335 (QNTTPSKLIP…EKQVERKITP (315 aa)). The segment covering 30 to 42 (PQQQQKQKQQQTQ) has biased composition (low complexity). 2 disordered regions span residues 30–74 (PQQQ…QPQQ) and 113–253 (SQNV…PHNH). Residues 43-53 (PHHHHHHHQQH) are compositionally biased toward basic residues. Residues 54 to 74 (QQHQQQHQPNQQIKQQQQPQQ) are compositionally biased toward low complexity. The span at 120–151 (PPHHTQQRVPHHHGPNGAPHHHGPNGAPHHHG) shows a compositional bias: basic residues. The span at 168-180 (GHNTQGHVQTNHV) shows a compositional bias: polar residues. Positions 181-220 (NNINKNNINNNNNNNNNNNNNNNNNNNNNINDNKNIRNNI) are enriched in low complexity. A helical membrane pass occupies residues 336 to 356 (IMVLYILLASTMVIQLFIMVF). Over 357 to 375 (KQVKHIREINAKTTMESLL) the chain is Cytoplasmic.

The protein localises to the membrane. This is an uncharacterized protein from Dictyostelium discoideum (Social amoeba).